The following is a 187-amino-acid chain: Elongation factor P (187 aa).

The residue at position 34 (Lys34) is an N6-(3,6-diaminohexanoyl)-5-hydroxylysine.

Belongs to the elongation factor P family. May be beta-lysylated on the epsilon-amino group of Lys-34 by the combined action of EpmA and EpmB, and then hydroxylated on the C5 position of the same residue by EpmC (if this protein is present). Lysylation is critical for the stimulatory effect of EF-P on peptide-bond formation. The lysylation moiety may extend toward the peptidyltransferase center and stabilize the terminal 3-CCA end of the tRNA. Hydroxylation of the C5 position on Lys-34 may allow additional potential stabilizing hydrogen-bond interactions with the P-tRNA.

The protein resides in the cytoplasm. Its pathway is protein biosynthesis; polypeptide chain elongation. Involved in peptide bond synthesis. Alleviates ribosome stalling that occurs when 3 or more consecutive Pro residues or the sequence PPG is present in a protein, possibly by augmenting the peptidyl transferase activity of the ribosome. Modification of Lys-34 is required for alleviation. The sequence is that of Elongation factor P from Vesicomyosocius okutanii subsp. Calyptogena okutanii (strain HA).